Reading from the N-terminus, the 415-residue chain is 3-isopropylmalate dehydratase large subunit (415 aa).

Cys-295, Cys-353, and Cys-356 together coordinate [4Fe-4S] cluster.

The protein belongs to the aconitase/IPM isomerase family. LeuC type 2 subfamily. As to quaternary structure, heterodimer of LeuC and LeuD. It depends on [4Fe-4S] cluster as a cofactor.

The enzyme catalyses (2R,3S)-3-isopropylmalate = (2S)-2-isopropylmalate. It functions in the pathway amino-acid biosynthesis; L-leucine biosynthesis; L-leucine from 3-methyl-2-oxobutanoate: step 2/4. Its function is as follows. Catalyzes the isomerization between 2-isopropylmalate and 3-isopropylmalate, via the formation of 2-isopropylmaleate. This chain is 3-isopropylmalate dehydratase large subunit, found in Pyrobaculum aerophilum (strain ATCC 51768 / DSM 7523 / JCM 9630 / CIP 104966 / NBRC 100827 / IM2).